The chain runs to 306 residues: Small ribosomal subunit protein uS2 (306 aa).

A disordered region spans residues 257–306; the sequence is EGDKKDETAAAAEVQTSAETEKVADAEKPAEAVAEAEAEAPAADADAEQA. The segment covering 275–286 has biased composition (basic and acidic residues); it reads ETEKVADAEKPA. Low complexity predominate over residues 287 to 300; it reads EAVAEAEAEAPAAD.

It belongs to the universal ribosomal protein uS2 family.

The sequence is that of Small ribosomal subunit protein uS2 from Streptomyces griseus subsp. griseus (strain JCM 4626 / CBS 651.72 / NBRC 13350 / KCC S-0626 / ISP 5235).